A 405-amino-acid chain; its full sequence is Arginine biosynthesis bifunctional protein ArgJ (405 aa).

Residues Thr-152, Lys-178, Thr-189, Glu-276, Asn-400, and Thr-405 each coordinate substrate. Thr-189 (nucleophile) is an active-site residue.

This sequence belongs to the ArgJ family. In terms of assembly, heterotetramer of two alpha and two beta chains.

Its subcellular location is the cytoplasm. It carries out the reaction N(2)-acetyl-L-ornithine + L-glutamate = N-acetyl-L-glutamate + L-ornithine. The enzyme catalyses L-glutamate + acetyl-CoA = N-acetyl-L-glutamate + CoA + H(+). It participates in amino-acid biosynthesis; L-arginine biosynthesis; L-ornithine and N-acetyl-L-glutamate from L-glutamate and N(2)-acetyl-L-ornithine (cyclic): step 1/1. Its pathway is amino-acid biosynthesis; L-arginine biosynthesis; N(2)-acetyl-L-ornithine from L-glutamate: step 1/4. Its function is as follows. Catalyzes two activities which are involved in the cyclic version of arginine biosynthesis: the synthesis of N-acetylglutamate from glutamate and acetyl-CoA as the acetyl donor, and of ornithine by transacetylation between N(2)-acetylornithine and glutamate. This chain is Arginine biosynthesis bifunctional protein ArgJ, found in Pseudomonas aeruginosa (strain ATCC 15692 / DSM 22644 / CIP 104116 / JCM 14847 / LMG 12228 / 1C / PRS 101 / PAO1).